We begin with the raw amino-acid sequence, 278 residues long: NAD kinase (278 aa).

D56 serves as the catalytic Proton acceptor. NAD(+) contacts are provided by residues 56 to 57 (DG), 132 to 133 (NE), R158, D160, and 171 to 176 (TAYNKS).

This sequence belongs to the NAD kinase family. The cofactor is a divalent metal cation.

Its subcellular location is the cytoplasm. The catalysed reaction is NAD(+) + ATP = ADP + NADP(+) + H(+). In terms of biological role, involved in the regulation of the intracellular balance of NAD and NADP, and is a key enzyme in the biosynthesis of NADP. Catalyzes specifically the phosphorylation on 2'-hydroxyl of the adenosine moiety of NAD to yield NADP. The protein is NAD kinase of Streptococcus pyogenes serotype M1.